The following is a 230-amino-acid chain: D-glycero-alpha-D-manno-heptose 1-phosphate guanylyltransferase (230 aa).

The protein belongs to the D-alpha-D-heptose-1-P guanylyltransferase family.

It carries out the reaction D-glycero-alpha-D-manno-heptose 1-phosphate + GTP + H(+) = GDP-D-glycero-alpha-D-manno-heptose + diphosphate. Its pathway is nucleotide-sugar biosynthesis; GDP-D-glycero-alpha-D-manno-heptose biosynthesis; GDP-D-glycero-alpha-D-manno-heptose from D-glycero-alpha-D-manno-heptose 7-phosphate: step 3/3. The protein operates within cell surface structure biogenesis; S-layer biogenesis. Functionally, catalyzes the GDP transfer from GTP to D-glycero-alpha-D-manno-heptose 1-phosphate, yielding GDP-D-alpha-D-heptose. Cannot use ATP, CTP, dTTP or UTP as substrate. The chain is D-glycero-alpha-D-manno-heptose 1-phosphate guanylyltransferase (hddC) from Aneurinibacillus thermoaerophilus.